Consider the following 2626-residue polypeptide: Unconventional myosin-IXa (2626 aa).

The Ras-associating domain maps to 14–112 (NEHTLRIYPG…YRFLLREKNL (99 aa)). Positions 146-1017 (KDFDDLCSLP…ERQHLQDLLH (872 aa)) constitute a Myosin motor domain. The helical transmembrane segment at 175-195 (IYTYVGSILIAINPFKFLPIY) threads the bilayer. 239–246 (GESGSGKT) is an ATP binding site. Residue serine 755 is modified to Phosphoserine. The segment at 908 to 919 (QAEPYFVKCIRS) is actin-binding. 5 consecutive IQ domains span residues 1021–1041 (LRRI…QQFL), 1043–1072 (LRQA…EKDA), 1075–1104 (MASA…AAVI), 1116–1145 (RHRA…KIIL), and 1139–1168 (QRNK…ERLK). The interval 1022–1163 (RRIILLQRWF…RARQRYKALK (142 aa)) is neck or regulatory domain. Positions 1164–2589 (EERLKETKLE…LKNVKNSPQK (1426 aa)) are tail. The segment covering 1221–1240 (RESSMDFSKESPDKQQERGR) has biased composition (basic and acidic residues). Positions 1221-1276 (RESSMDFSKESPDKQQERGRSQSGTDLQGDVIVRQRPKSLEDLHQKKVGRAKRESR) are disordered. Serine 1243 carries the phosphoserine modification. A Phosphothreonine modification is found at threonine 1245. Phosphoserine is present on serine 1259. Residues 1265 to 1292 (QKKVGRAKRESRRMRELEQAIFSLELLK) are a coiled coil. A compositionally biased stretch (basic residues) spans 1266 to 1276 (KKVGRAKRESR). A phosphoserine mark is found at serine 1300 and serine 1318. Polar residues predominate over residues 1360–1375 (PSTFTNPKFDSQNNAL). Positions 1360–1397 (PSTFTNPKFDSQNNALSASSETSSTFSGKGASSDSEHL) are disordered. Low complexity predominate over residues 1376–1386 (SASSETSSTFS). Residues 1493-1540 (TVLKKLEKLNIEKEKRQKQLQQQNEKEMMEQIRQQTDILEKERKAFKT) adopt a coiled-coil conformation. Disordered regions lie at residues 1562 to 1602 (VERP…PPKD), 1618 to 1673 (SRTV…SRPI), 1689 to 1726 (GNPQ…RMAR), 1765 to 1784 (SELG…SEMT), and 1872 to 1907 (QYHP…KRGV). Composition is skewed to basic and acidic residues over residues 1620–1632 (TVKE…RMGT) and 1659–1669 (HRSDDPSREGS). Over residues 1716 to 1726 (PAHKKKARMAR) the composition is skewed to basic residues. Positions 1772–1784 (SLGQASHSDSEMT) are enriched in polar residues. The span at 1887 to 1899 (CRKEFKENKEPSP) shows a compositional bias: basic and acidic residues. Position 2016 is a phosphoserine (serine 2016). The Phorbol-ester/DAG-type zinc finger occupies 2067–2116 (GHMFKATQYSIPTYCEYCSSLIWIMDRASVCKLCKYACHKKCCLKTTAKC). The region spanning 2131–2319 (VELSRLTSED…LIVVEQMNKY (189 aa)) is the Rho-GAP domain. The tract at residues 2365-2385 (SGKGRLHRGSHPNPSSPVIVR) is disordered. At serine 2380 the chain carries Phosphoserine. Residues 2408–2444 (TDQQQAAMQQEEKVLTEQIENLQKEKEELTFEMLVLE) are a coiled coil. The interval 2449–2527 (DDEALESEAS…NTTSSHGTRK (79 aa)) is disordered. Over residues 2504–2522 (SLDSVSSSVSSCLSNTTSS) the composition is skewed to low complexity. A Phosphoserine modification is found at serine 2542. Residues 2552 to 2614 (PLGQAKSLED…TVDSDCSSTQ (63 aa)) form a disordered region.

This sequence belongs to the TRAFAC class myosin-kinesin ATPase superfamily. Myosin family. Post-translationally, phosphorylated by ALPK1 following monosodium urate monohydrate (MSU)-induced inflammation. As to expression, expressed at high levels in brain, followed by testis and spleen. Expressed at very low levels, in kidney. Detected abundantly in brain and testis and at lower levels in adrenal gland, kidney, lung and spleen (at protein level). In adrenal gland it is mostly found in the medulla but not in the cortex. In brain, it is found in the cerebellum and the CA2-CA3 regions of the hippocampus.

It is found in the membrane. The protein localises to the cytoplasm. The protein resides in the synapse. It localises to the cell projection. Its subcellular location is the growth cone. Its function is as follows. Myosins are actin-based motor molecules with ATPase activity. Unconventional myosins serve in intracellular movements. Regulates Rho by stimulating it's GTPase activity in neurons. Required for the regulation of neurite branching and motor neuron axon guidance. The sequence is that of Unconventional myosin-IXa (Myo9a) from Rattus norvegicus (Rat).